A 364-amino-acid chain; its full sequence is tRNA 2-selenouridine synthase (364 aa).

Residues 14 to 137 (LLADTPLIDV…LRQTAIQATW (124 aa)) form the Rhodanese domain. Cys97 functions as the S-selanylcysteine intermediate in the catalytic mechanism. Position 149 (Gly149) interacts with (2E)-geranyl diphosphate.

It belongs to the SelU family. Monomer.

The catalysed reaction is 5-methylaminomethyl-2-thiouridine(34) in tRNA + selenophosphate + (2E)-geranyl diphosphate + H2O + H(+) = 5-methylaminomethyl-2-selenouridine(34) in tRNA + (2E)-thiogeraniol + phosphate + diphosphate. It carries out the reaction 5-methylaminomethyl-2-thiouridine(34) in tRNA + (2E)-geranyl diphosphate = 5-methylaminomethyl-S-(2E)-geranyl-thiouridine(34) in tRNA + diphosphate. It catalyses the reaction 5-methylaminomethyl-S-(2E)-geranyl-thiouridine(34) in tRNA + selenophosphate + H(+) = 5-methylaminomethyl-2-(Se-phospho)selenouridine(34) in tRNA + (2E)-thiogeraniol. The enzyme catalyses 5-methylaminomethyl-2-(Se-phospho)selenouridine(34) in tRNA + H2O = 5-methylaminomethyl-2-selenouridine(34) in tRNA + phosphate. In terms of biological role, involved in the post-transcriptional modification of the uridine at the wobble position (U34) of tRNA(Lys), tRNA(Glu) and tRNA(Gln). Catalyzes the conversion of 2-thiouridine (S2U-RNA) to 2-selenouridine (Se2U-RNA). Acts in a two-step process involving geranylation of 2-thiouridine (S2U) to S-geranyl-2-thiouridine (geS2U) and subsequent selenation of the latter derivative to 2-selenouridine (Se2U) in the tRNA chain. The polypeptide is tRNA 2-selenouridine synthase (Salmonella typhimurium (strain LT2 / SGSC1412 / ATCC 700720)).